The chain runs to 430 residues: Trigger factor (430 aa).

Positions 163 to 248 constitute a PPIase FKBP-type domain; that stretch reads GDTAVFDFAG…LHEVKTKQVP (86 aa).

The protein belongs to the FKBP-type PPIase family. Tig subfamily.

Its subcellular location is the cytoplasm. The catalysed reaction is [protein]-peptidylproline (omega=180) = [protein]-peptidylproline (omega=0). Functionally, involved in protein export. Acts as a chaperone by maintaining the newly synthesized protein in an open conformation. Functions as a peptidyl-prolyl cis-trans isomerase. The polypeptide is Trigger factor (Exiguobacterium sp. (strain ATCC BAA-1283 / AT1b)).